We begin with the raw amino-acid sequence, 311 residues long: Putative ankyrin repeat protein RF_0923 (311 aa).

ANK repeat units follow at residues 42–71 (IDNT…EQAI), 77–106 (NGNT…PQAI), 112–141 (NGNT…PQAI), 147–176 (NGNT…EQAI), and 182–213 (KGCT…AINH).

The sequence is that of Putative ankyrin repeat protein RF_0923 from Rickettsia felis (strain ATCC VR-1525 / URRWXCal2) (Rickettsia azadi).